The sequence spans 302 residues: Glutaminase (302 aa).

Positions 61, 111, 155, 162, 186, 238, and 256 each coordinate substrate.

Belongs to the glutaminase family. In terms of assembly, homotetramer.

It catalyses the reaction L-glutamine + H2O = L-glutamate + NH4(+). In Pseudomonas aeruginosa (strain LESB58), this protein is Glutaminase.